Reading from the N-terminus, the 445-residue chain is Phosphoglucosamine mutase (445 aa).

Serine 102 serves as the catalytic Phosphoserine intermediate. 4 residues coordinate Mg(2+): serine 102, aspartate 241, aspartate 243, and aspartate 245. Phosphoserine is present on serine 102.

Belongs to the phosphohexose mutase family. Mg(2+) serves as cofactor. Activated by phosphorylation.

The catalysed reaction is alpha-D-glucosamine 1-phosphate = D-glucosamine 6-phosphate. In terms of biological role, catalyzes the conversion of glucosamine-6-phosphate to glucosamine-1-phosphate. The protein is Phosphoglucosamine mutase of Photorhabdus laumondii subsp. laumondii (strain DSM 15139 / CIP 105565 / TT01) (Photorhabdus luminescens subsp. laumondii).